The sequence spans 355 residues: 3-dehydroquinate synthase (355 aa).

NAD(+) contacts are provided by residues 71-76 (EGEERK), 105-109 (GVVGD), 129-130 (TS), Lys-142, and Lys-151. 3 residues coordinate Zn(2+): Glu-184, His-246, and His-263.

The protein belongs to the sugar phosphate cyclases superfamily. Dehydroquinate synthase family. It depends on Co(2+) as a cofactor. Requires Zn(2+) as cofactor. NAD(+) serves as cofactor.

It localises to the cytoplasm. It carries out the reaction 7-phospho-2-dehydro-3-deoxy-D-arabino-heptonate = 3-dehydroquinate + phosphate. It functions in the pathway metabolic intermediate biosynthesis; chorismate biosynthesis; chorismate from D-erythrose 4-phosphate and phosphoenolpyruvate: step 2/7. Catalyzes the conversion of 3-deoxy-D-arabino-heptulosonate 7-phosphate (DAHP) to dehydroquinate (DHQ). In Streptococcus pneumoniae serotype 19F (strain G54), this protein is 3-dehydroquinate synthase.